The sequence spans 1250 residues: SRC kinase signaling inhibitor 1 (1250 aa).

Over residues 19-45 (AEGRARSPREEVGPRDPGGRGEPDPER) the composition is skewed to basic and acidic residues. The interval 19–78 (AEGRARSPREEVGPRDPGGRGEPDPERSSPPMLSADDAEYPREYRTLGGGGGGGSGGRRF) is disordered. Phosphoserine is present on residues S47 and S52. The segment covering 65 to 75 (LGGGGGGGSGG) has biased composition (gly residues). The residue at position 79 (S79) is a Phosphoserine. The residue at position 86 (T86) is a Phosphothreonine. Phosphoserine is present on residues S87, S98, S211, S233, S237, S247, and S293. Y309 carries the post-translational modification Phosphotyrosine. A disordered region spans residues 352–448 (ASRESSPTRR…RRDVKPDEDL (97 aa)). A compositionally biased stretch (polar residues) spans 354–364 (RESSPTRRLNN). Over residues 365–374 (LSPASHLASS) the composition is skewed to low complexity. A phosphoserine mark is found at S366, S375, and S392. Residues 381–399 (PSGLPSGLPSGSPSRSRLS) are compositionally biased toward low complexity. 2 positions are modified to omega-N-methylarginine: R397 and R404. A phosphoserine mark is found at S411, S430, and S432. Over residues 437–448 (LERRDVKPDEDL) the composition is skewed to basic and acidic residues. Phosphotyrosine is present on Y464. The segment at 538 to 710 (PSSPQKLADV…ASSTPAGQPT (173 aa)) is disordered. Positions 552–563 (GGPPPPHSPYSG) are enriched in pro residues. 3 positions are modified to phosphoserine: S559, S562, and S566. Omega-N-methylarginine is present on R567. S569, S579, S581, S583, and S588 each carry phosphoserine. Positions 590–607 (GGKARSTGSASTAGAPPS) are enriched in low complexity. The segment covering 628–640 (KDTETRERMEAME) has biased composition (basic and acidic residues). A phosphoserine mark is found at S664 and S688. A phosphothreonine mark is found at T691 and T704. The segment covering 701 to 710 (ASSTPAGQPT) has biased composition (low complexity). Coiled-coil stretches lie at residues 712–753 (VSRL…RALL) and 793–813 (EELI…IQRD). The interval 714–764 (RLQMQLHLRGLQNSASDLRGQLQQLRNVQLQNQESVRALLKPTEADVSMRV) is interaction with SNAP25. S911 and S933 each carry phosphoserine. Disordered regions lie at residues 924–982 (GLDF…ERDW) and 1016–1094 (DCAS…TGEV). The residue at position 951 (T951) is a Phosphothreonine. S1054 is modified (phosphoserine). Pro residues predominate over residues 1069-1078 (KSPPPPPPRR). Residues S1110 and S1127 each carry the phosphoserine modification. A disordered region spans residues 1155–1250 (ELESGGSSVP…FGARNSSISF (96 aa)). Over residues 1217–1250 (PNETSSPGSEKPSGSRTSIPVLTSFGARNSSISF) the composition is skewed to polar residues.

This sequence belongs to the SRCIN1 family. Interacts with the N-terminal coiled-coil region of SNAP25. Interacts with BCAR1/p130Cas and SRC through its C-terminal domain. Interacts with CSK, CTTN, SORBS3/vinexin, SYP and MAPRE3/EB3. In terms of processing, tyrosine-phosphorylated in response to EGF and to cell adhesion to integrin ligands. In terms of tissue distribution, expressed predominantly in central nervous system with high levels detected in cortex, cerebellum, midbrain and spinal cord (at protein level). Also expressed in testis and epithelial-rich tissues such as mammary gland, lung and kidney.

It localises to the cytoplasm. Its subcellular location is the cytoskeleton. It is found in the cell projection. The protein localises to the axon. The protein resides in the dendrite. It localises to the presynapse. Its subcellular location is the postsynapse. It is found in the postsynaptic density. In terms of biological role, acts as a negative regulator of SRC by activating CSK which inhibits SRC activity and downstream signaling, leading to impaired cell spreading and migration. Regulates dendritic spine morphology. Involved in calcium-dependent exocytosis. May play a role in neurotransmitter release or synapse maintenance. This Mus musculus (Mouse) protein is SRC kinase signaling inhibitor 1 (Srcin1).